Here is a 469-residue protein sequence, read N- to C-terminus: Proline--tRNA ligase (469 aa).

It belongs to the class-II aminoacyl-tRNA synthetase family. ProS type 3 subfamily. Homodimer.

Its subcellular location is the cytoplasm. The catalysed reaction is tRNA(Pro) + L-proline + ATP = L-prolyl-tRNA(Pro) + AMP + diphosphate. In terms of biological role, catalyzes the attachment of proline to tRNA(Pro) in a two-step reaction: proline is first activated by ATP to form Pro-AMP and then transferred to the acceptor end of tRNA(Pro). In Methanobrevibacter smithii (strain ATCC 35061 / DSM 861 / OCM 144 / PS), this protein is Proline--tRNA ligase.